A 291-amino-acid chain; its full sequence is Phosphate import ATP-binding protein PstB (291 aa).

One can recognise an ABC transporter domain in the interval 45–286 (YSTQNLDLWY…PADKQTEDYI (242 aa)). An ATP-binding site is contributed by 77–84 (GPSGCGKS).

It belongs to the ABC transporter superfamily. Phosphate importer (TC 3.A.1.7) family. The complex is composed of two ATP-binding proteins (PstB), two transmembrane proteins (PstC and PstA) and a solute-binding protein (PstS).

It is found in the cell membrane. It carries out the reaction phosphate(out) + ATP + H2O = ADP + 2 phosphate(in) + H(+). Part of the ABC transporter complex PstSACB involved in phosphate import. Responsible for energy coupling to the transport system. The chain is Phosphate import ATP-binding protein PstB from Staphylococcus epidermidis (strain ATCC 35984 / DSM 28319 / BCRC 17069 / CCUG 31568 / BM 3577 / RP62A).